Reading from the N-terminus, the 506-residue chain is Lysine--tRNA ligase (506 aa).

Glu-416 and Glu-423 together coordinate Mg(2+).

Belongs to the class-II aminoacyl-tRNA synthetase family. As to quaternary structure, homodimer. Mg(2+) is required as a cofactor.

Its subcellular location is the cytoplasm. It carries out the reaction tRNA(Lys) + L-lysine + ATP = L-lysyl-tRNA(Lys) + AMP + diphosphate. The chain is Lysine--tRNA ligase from Bordetella parapertussis (strain 12822 / ATCC BAA-587 / NCTC 13253).